The primary structure comprises 316 residues: tRNA methyltransferase 10 homolog B (316 aa).

Disordered regions lie at residues 1-30 (MDCE…RDDG) and 42-98 (VEYD…DLGN). Basic residues predominate over residues 63-82 (VQRKQRHWERIVSSKKSKRK). A coiled-coil region spans residues 75–96 (SSKKSKRKQERERRKIKRAEDL). Basic and acidic residues predominate over residues 83 to 95 (QERERRKIKRAED). In terms of domain architecture, SAM-dependent MTase TRM10-type spans 113-310 (TKEKLLEAKH…KGVSPGKGYI (198 aa)).

It belongs to the class IV-like SAM-binding methyltransferase superfamily. TRM10 family.

It catalyses the reaction guanosine(9) in tRNA + S-adenosyl-L-methionine = N(1)-methylguanosine(9) in tRNA + S-adenosyl-L-homocysteine + H(+). S-adenosyl-L-methionine-dependent guanine N(1)-methyltransferase that catalyzes the formation of N(1)-methylguanine at position 9 (m1G9) in tRNAs. Probably not able to catalyze formation of N(1)-methyladenine at position 9 (m1A9) in tRNAs. The protein is tRNA methyltransferase 10 homolog B (Trmt10b) of Rattus norvegicus (Rat).